Here is a 353-residue protein sequence, read N- to C-terminus: Peroxisome assembly protein 12-B (353 aa).

The Peroxisomal matrix portion of the chain corresponds to 1-19 (MAERGAHITTTSPLDDRPS). Residues 20-47 (IFEVVAQESLMAAARPALHHIVKVLAES) form a helical membrane-spanning segment. The Cytoplasmic portion of the chain corresponds to 48 to 51 (NPAR). Residues 52-76 (YGTLWRWFDELYTLLECLLQQHYLS) form a helical membrane-spanning segment. The Peroxisomal matrix segment spans residues 77–104 (WASASFSENFYGLKRVTLGKQVGQRNLA). A helical membrane pass occupies residues 105-134 (RKEYWKSLLLLVLIPYLRIKLEKLVNSLRE). At 135 to 139 (EEDYS) the chain is on the cytoplasmic side. A helical transmembrane segment spans residues 140 to 178 (IQNPTSFHKRCYKAILASYPFLKLGWEAWFLFYQLRYIL). Residues 179–243 (WNGKHHSPLL…LGAVTLSVSS (65 aa)) are Peroxisomal matrix-facing. A helical membrane pass occupies residues 244–271 (SLSLGVFFLQFLDWWYSAENRETLKSLG). Topologically, residues 272–353 (NLPVPPPPIH…HLIKLYTPDG (82 aa)) are cytoplasmic. Zn(2+) is bound by residues C298, C301, C319, and C322. Residues 298-337 (CPLCRKVRVNDTALGTSGYVFCYRCAYYYVKTHQRCPVSG) form an RING-type; degenerate zinc finger.

The protein belongs to the pex2/pex10/pex12 family. In terms of assembly, component of the PEX2-PEX10-PEX12 retrotranslocation channel.

The protein localises to the peroxisome membrane. It participates in protein modification; protein ubiquitination. Its function is as follows. Component of a retrotranslocation channel required for peroxisome organization by mediating export of the PEX5 receptor from peroxisomes to the cytosol, thereby promoting PEX5 recycling. The retrotranslocation channel is composed of PEX2, PEX10 and PEX12; each subunit contributing transmembrane segments that coassemble into an open channel that specifically allows the passage of PEX5 through the peroxisomal membrane. PEX12 also regulates PEX5 recycling by activating the E3 ubiquitin-protein ligase activity of PEX10. When PEX5 recycling is compromised, PEX12 stimulates PEX10-mediated polyubiquitination of PEX5, leading to its subsequent degradation. The polypeptide is Peroxisome assembly protein 12-B (Xenopus laevis (African clawed frog)).